The primary structure comprises 420 residues: Protein disulfide isomerase Creld1 (420 aa).

An N-terminal signal peptide occupies residues 1-29 (MAPLPPRGLVPSLLWCLSLFLSLPGPVWL). The Extracellular segment spans residues 30–362 (QPSPPPHPSP…GFFAEMTEDE (333 aa)). The short motif at 46–49 (CHTC) is the CXXC element. Intrachain disulfides connect C46/C49, C155/C169, C163/C181, and C183/C192. The EGF-like 1 domain maps to 153–193 (LPCPGGTERPCGGYGQCEGEGTRGGSGHCDCQAGYGGEACG). Residue N205 is glycosylated (N-linked (GlcNAc...) asparagine). 2 FU repeats span residues 208-255 (HLVC…EQAT) and 268-315 (SYEC…VVCP). The CXXC signature appears at 278-281 (CLGC). Intrachain disulfides connect C278-C281, C309-C321, C314-C330, and C332-C343. Positions 305–342 (DVDECETVVCPGENEKCENTEGGYRCVCAEGYRQEDGI) constitute an EGF-like 2; calcium-binding domain. A helical transmembrane segment spans residues 363-383 (MVVLQQMFFGVIICALATLAA). Position 384 (K384) is a topological domain, cytoplasmic. A helical membrane pass occupies residues 385–405 (GDLVFTAIFIGAVAAMTGYWL). The Extracellular segment spans residues 406 to 420 (SERSDRVLEGFIKGR).

It belongs to the CRELD family. In terms of tissue distribution, expressed in myoblast C2C12 cells (at protein level).

It is found in the membrane. It catalyses the reaction Catalyzes the rearrangement of -S-S- bonds in proteins.. In terms of biological role, protein disulfide isomerase. Promotes the localization of acetylcholine receptors (AChRs) to the plasma membrane. The sequence is that of Protein disulfide isomerase Creld1 (Creld1) from Mus musculus (Mouse).